The chain runs to 68 residues: Large ribosomal subunit protein uL30 (68 aa).

Residues 1–26 (MSAKKSASKATVTVQQIGSPLRREPS) are disordered. Polar residues predominate over residues 8-18 (SKATVTVQQIG).

This sequence belongs to the universal ribosomal protein uL30 family. Part of the 50S ribosomal subunit.

This chain is Large ribosomal subunit protein uL30, found in Parvibaculum lavamentivorans (strain DS-1 / DSM 13023 / NCIMB 13966).